A 448-amino-acid polypeptide reads, in one-letter code: Histidine--tRNA ligase (448 aa).

The protein belongs to the class-II aminoacyl-tRNA synthetase family. As to quaternary structure, homodimer.

It is found in the cytoplasm. The catalysed reaction is tRNA(His) + L-histidine + ATP = L-histidyl-tRNA(His) + AMP + diphosphate + H(+). This Treponema denticola (strain ATCC 35405 / DSM 14222 / CIP 103919 / JCM 8153 / KCTC 15104) protein is Histidine--tRNA ligase.